A 165-amino-acid chain; its full sequence is Regulator of ribonuclease activity A (165 aa).

This sequence belongs to the RraA family. Homotrimer. Binds to both RNA-binding sites in the C-terminal region of Rne and to RhlB.

Its subcellular location is the cytoplasm. Globally modulates RNA abundance by binding to RNase E (Rne) and regulating its endonucleolytic activity. Can modulate Rne action in a substrate-dependent manner by altering the composition of the degradosome. Modulates RNA-binding and helicase activities of the degradosome. The protein is Regulator of ribonuclease activity A of Haemophilus ducreyi (strain 35000HP / ATCC 700724).